The chain runs to 175 residues: Hypoxanthine-guanine phosphoribosyltransferase (175 aa).

The diphosphate site is built by lysine 40 and glycine 41. Mg(2+) is bound by residues glutamate 96 and aspartate 97. Aspartate 100 acts as the Proton acceptor in catalysis. GMP-binding positions include lysine 128, 149–150, and aspartate 156; that span reads FL. Arginine 162 serves as a coordination point for diphosphate.

This sequence belongs to the purine/pyrimidine phosphoribosyltransferase family. Mg(2+) is required as a cofactor.

It is found in the cytoplasm. It carries out the reaction IMP + diphosphate = hypoxanthine + 5-phospho-alpha-D-ribose 1-diphosphate. The enzyme catalyses GMP + diphosphate = guanine + 5-phospho-alpha-D-ribose 1-diphosphate. It participates in purine metabolism; IMP biosynthesis via salvage pathway; IMP from hypoxanthine: step 1/1. It functions in the pathway purine metabolism; GMP biosynthesis via salvage pathway; GMP from guanine: step 1/1. In terms of biological role, purine salvage pathway enzyme that catalyzes the transfer of the ribosyl-5-phosphate group from 5-phospho-alpha-D-ribose 1-diphosphate (PRPP) to the N9 position of the 6-oxopurines hypoxanthine and guanine to form the corresponding ribonucleotides IMP (inosine 5'-monophosphate) and GMP (guanosine 5'-monophosphate), with the release of PPi. This Mycoplasma genitalium (strain ATCC 33530 / DSM 19775 / NCTC 10195 / G37) (Mycoplasmoides genitalium) protein is Hypoxanthine-guanine phosphoribosyltransferase (hpt).